Consider the following 286-residue polypeptide: Ribosome-inactivating protein momordin I (286 aa).

The first 23 residues, 1-23 (MSRFSVLSFLILAIFLGGSIVKG), serve as a signal peptide directing secretion. Glutamate 183 is an active-site residue. Asparagine 250 carries an N-linked (GlcNAc...) asparagine glycan. Positions 270 to 286 (AEGDNGDVSTTHGFSSY) are cleaved as a propeptide — removed in mature form.

It belongs to the ribosome-inactivating protein family. Type 1 RIP subfamily.

It carries out the reaction Endohydrolysis of the N-glycosidic bond at one specific adenosine on the 28S rRNA.. The sequence is that of Ribosome-inactivating protein momordin I from Momordica charantia (Bitter gourd).